The sequence spans 431 residues: Adenylosuccinate synthetase (431 aa).

GTP-binding positions include 12–18 and 40–42; these read GDEGKGK and GHT. Catalysis depends on aspartate 13, which acts as the Proton acceptor. 2 residues coordinate Mg(2+): aspartate 13 and glycine 40. IMP-binding positions include 13–16, 38–41, threonine 131, arginine 145, glutamine 225, threonine 240, and arginine 304; these read DEGK and NAGH. Catalysis depends on histidine 41, which acts as the Proton donor. 300–306 contributes to the substrate binding site; it reads TNTGRRR. GTP-binding positions include arginine 306, 332-334, and 414-416; these read KLD and STS.

Belongs to the adenylosuccinate synthetase family. Homodimer. Requires Mg(2+) as cofactor.

The protein resides in the cytoplasm. It carries out the reaction IMP + L-aspartate + GTP = N(6)-(1,2-dicarboxyethyl)-AMP + GDP + phosphate + 2 H(+). It participates in purine metabolism; AMP biosynthesis via de novo pathway; AMP from IMP: step 1/2. Its function is as follows. Plays an important role in the de novo pathway of purine nucleotide biosynthesis. Catalyzes the first committed step in the biosynthesis of AMP from IMP. This is Adenylosuccinate synthetase from Methylocella silvestris (strain DSM 15510 / CIP 108128 / LMG 27833 / NCIMB 13906 / BL2).